We begin with the raw amino-acid sequence, 459 residues long: Glutamate--isopropylamine ligase (459 aa).

In terms of domain architecture, GS beta-grasp spans 19 to 115; it reads HNIDTIRLGA…VLCDIQHLNG (97 aa). The GS catalytic domain maps to 122-459; it reads PRNLLRKAIE…WELARYLDII (338 aa).

The protein belongs to the glutamine synthetase family.

The catalysed reaction is isopropylamine + L-glutamate + ATP = gamma-L-glutamyl-isopropylamide + ADP + phosphate + H(+). In terms of biological role, involved in the degradation of isopropylamine, which is a constituent of the herbicides atrazine. Catalyzes the ATP-dependent formation of gamma-glutamyl-isopropylamide from isopropylamine and L-glutamate. It can also use aminoalkanes, amino-alcohols (L-alaninol and D-alaninol) and amino-esters as substrates. The polypeptide is Glutamate--isopropylamine ligase (ipuC) (Pseudomonas sp).